The primary structure comprises 62 residues: KappaPI-actitoxin-Avd3a (62 aa).

Residues 5-55 (CELPKVVGPCRARFPRYYYNSSSKRCEKFIYGGCGGNANNFHTLEECEKVC) form the BPTI/Kunitz inhibitor domain. 3 disulfide bridges follow: Cys5-Cys55, Cys14-Cys38, and Cys30-Cys51.

Belongs to the venom Kunitz-type family. Sea anemone type 2 potassium channel toxin subfamily.

Its subcellular location is the secreted. It is found in the nematocyst. Functionally, serine protease inhibitor that inhibits both tissue and plasma kallikreins. Has hemolytic activity. Inhibits voltage-gated potassium channels. In Anemonia sulcata (Mediterranean snakelocks sea anemone), this protein is KappaPI-actitoxin-Avd3a.